A 122-amino-acid polypeptide reads, in one-letter code: UPF0231 protein VIBHAR_03438 (122 aa).

Belongs to the UPF0231 family.

The chain is UPF0231 protein VIBHAR_03438 from Vibrio campbellii (strain ATCC BAA-1116).